Here is a 79-residue protein sequence, read N- to C-terminus: Large ribosomal subunit protein uL24 (79 aa).

The disordered stretch occupies residues 1–29 (MPKLKKLLLKVSTSKPNTNPPSQNEEKGT). Residues 11–23 (VSTSKPNTNPPSQ) are compositionally biased toward polar residues.

This sequence belongs to the universal ribosomal protein uL24 family. In terms of assembly, part of the 50S ribosomal subunit.

Functionally, one of two assembly initiator proteins, it binds directly to the 5'-end of the 23S rRNA, where it nucleates assembly of the 50S subunit. Its function is as follows. One of the proteins that surrounds the polypeptide exit tunnel on the outside of the subunit. The sequence is that of Large ribosomal subunit protein uL24 (rplX) from Onion yellows phytoplasma (strain OY-M).